The chain runs to 378 residues: GDP-mannose-dependent alpha-mannosyltransferase (378 aa).

This sequence belongs to the glycosyltransferase group 1 family. Glycosyltransferase 4 subfamily.

Its pathway is phospholipid metabolism; phosphatidylinositol metabolism. Catalyzes the addition of a mannose residue from GDP-D-mannose to GlcAGroAc2 to generate 1,2-di-O-C16/C18:1-(alpha-D-mannopyranosyl)-(1-4)-(alpha-D-glucopyranosyluronic acid)-(1-3)-glycerol(ManGlcAGroAc2). The sequence is that of GDP-mannose-dependent alpha-mannosyltransferase (mgtA) from Mycobacterium tuberculosis (strain CDC 1551 / Oshkosh).